Reading from the N-terminus, the 309-residue chain is Dehydrogenase/reductase SDR family member 7B (309 aa).

The Cytoplasmic segment spans residues Met1 to Leu5. Residues Gly6–Ile26 form a helical; Signal-anchor for type II membrane protein membrane-spanning segment. Residues Gln27–Asp271 are Lumenal-facing. NAD(+) contacts are provided by Ser47 and Leu49. Residue Ser179 coordinates substrate. Tyr192, Lys196, and Thr227 together coordinate NAD(+). Tyr192 acts as the Proton acceptor in catalysis.

Belongs to the short-chain dehydrogenases/reductases (SDR) family.

Its subcellular location is the endoplasmic reticulum membrane. Its function is as follows. Putative oxidoreductase. In Danio rerio (Zebrafish), this protein is Dehydrogenase/reductase SDR family member 7B (dhrs7b).